We begin with the raw amino-acid sequence, 211 residues long: Arginine exporter protein ArgO (211 aa).

Transmembrane regions (helical) follow at residues 1 to 21, 37 to 57, 68 to 88, 111 to 131, 147 to 167, and 179 to 199; these read MISY…PLGP, LMIA…GIFG, LLAL…FGAL, IIAT…DTFV, WFAL…ALLA, and AQRI…FQLA.

It belongs to the LysE/ArgO transporter (TC 2.A.75) family.

It localises to the cell inner membrane. It catalyses the reaction L-arginine(in) = L-arginine(out). In terms of biological role, involved in the export of arginine. Important to control the intracellular level of arginine and the correct balance between arginine and lysine. The chain is Arginine exporter protein ArgO from Salmonella paratyphi A (strain ATCC 9150 / SARB42).